The primary structure comprises 676 residues: DNA ligase (676 aa).

NAD(+)-binding positions include 34 to 38 (DAEYD), 84 to 85 (SL), and Glu116. Lys118 functions as the N6-AMP-lysine intermediate in the catalytic mechanism. 4 residues coordinate NAD(+): Arg139, Glu174, Lys294, and Lys318. The Zn(2+) site is built by Cys412, Cys415, Cys428, and Cys433. The region spanning 589-676 (KGGEALKGLT…RTGKKAEELV (88 aa)) is the BRCT domain.

Belongs to the NAD-dependent DNA ligase family. LigA subfamily. Requires Mg(2+) as cofactor. Mn(2+) is required as a cofactor.

The catalysed reaction is NAD(+) + (deoxyribonucleotide)n-3'-hydroxyl + 5'-phospho-(deoxyribonucleotide)m = (deoxyribonucleotide)n+m + AMP + beta-nicotinamide D-nucleotide.. Functionally, DNA ligase that catalyzes the formation of phosphodiester linkages between 5'-phosphoryl and 3'-hydroxyl groups in double-stranded DNA using NAD as a coenzyme and as the energy source for the reaction. It is essential for DNA replication and repair of damaged DNA. This is DNA ligase from Thermus thermophilus (strain ATCC 27634 / DSM 579 / HB8).